The primary structure comprises 3431 residues: KICSTOR complex protein SZT2 (3431 aa).

Disordered regions lie at residues 699 to 731 (SKEP…PQQA), 1067 to 1101 (LRDP…TLPS), and 1162 to 1231 (KPKL…GADG). The segment at 1082-1188 (VAKDRAGNST…ATGTKATESQ (107 aa)) is mediates interaction with the GATOR1 complex. Polar residues-rich tracts occupy residues 1088 to 1101 (GNST…TLPS) and 1182 to 1212 (TKAT…TPSC). Residue Ser1275 is modified to Phosphoserine. The disordered stretch occupies residues 1356–1378 (PPSPGPLSPGPFSSSIEEGPEPR). Position 1415 is a phosphoserine (Ser1415). Disordered stretches follow at residues 1512–1534 (YRES…SDAD), 1629–1678 (PPAS…HPGL), 1806–1883 (RAED…PGET), 2113–2148 (PPSL…SDAV), 2450–2512 (TEAG…LEEG), 2735–2756 (ASPP…GGPL), and 2866–2899 (ETCA…DVPP). Thr1640 is subject to Phosphothreonine. Residues 1641-1657 (SESSASFPRSPGQPSSL) show a composition bias toward polar residues. Ser1650 carries the post-translational modification Phosphoserine. Residues 1832 to 1854 (PLISLPSLSQGGSQPGPSRGLSL) show a composition bias toward low complexity. Over residues 2118-2129 (LSRSQEPISSED) the composition is skewed to polar residues. Over residues 2460–2473 (TTDDIVLDRPEDTR) the composition is skewed to basic and acidic residues. Residues 2739–2749 (LSREQGRLSGS) are compositionally biased toward low complexity.

Part of the KICSTOR complex composed of KPTN, ITFG2, KICS2 and SZT2. SZT2 probably serves as a link between the other three proteins in the KICSTOR complex and may mediate the direct interaction with the GATOR complex via GATOR1. The KICSTOR complex interacts directly with the GATOR1 complex and most probably indirectly with the GATOR2 complex in an amino acid-independent manner. As to expression, mostly expressed in brain, spinal cord and lung.

The protein resides in the lysosome membrane. It localises to the peroxisome. Functionally, as part of the KICSTOR complex functions in the amino acid-sensing branch of the TORC1 signaling pathway. Recruits, in an amino acid-independent manner, the GATOR1 complex to the lysosomal membranes and allows its interaction with GATOR2 and the RAG GTPases. Functions upstream of the RAG GTPases and is required to negatively regulate mTORC1 signaling in absence of amino acids. In absence of the KICSTOR complex mTORC1 is constitutively localized to the lysosome and activated. The KICSTOR complex is also probably involved in the regulation of mTORC1 by glucose. May play a role in the cellular response to oxidative stress. This chain is KICSTOR complex protein SZT2, found in Mus musculus (Mouse).